Here is a 326-residue protein sequence, read N- to C-terminus: Pyruvate dehydrogenase E1 component subunit beta (326 aa).

A thiamine diphosphate-binding site is contributed by Glu-59.

In terms of assembly, heterodimer of an alpha and a beta chain. Requires thiamine diphosphate as cofactor.

It catalyses the reaction N(6)-[(R)-lipoyl]-L-lysyl-[protein] + pyruvate + H(+) = N(6)-[(R)-S(8)-acetyldihydrolipoyl]-L-lysyl-[protein] + CO2. Its function is as follows. The pyruvate dehydrogenase complex catalyzes the overall conversion of pyruvate to acetyl-CoA and CO(2). It contains multiple copies of three enzymatic components: pyruvate dehydrogenase (E1), dihydrolipoamide acetyltransferase (E2) and lipoamide dehydrogenase (E3). The sequence is that of Pyruvate dehydrogenase E1 component subunit beta (pdhB) from Rickettsia conorii (strain ATCC VR-613 / Malish 7).